The sequence spans 330 residues: RNA polymerase sigma factor RpoS (330 aa).

The tract at residues 56–89 is sigma-70 factor domain-1; that stretch reads DATQLYLGEIGYSPLLTAEEEVYFARRALRGDVA. The tract at residues 94–164 is sigma-70 factor domain-2; sequence MIESNLRLVV…ERAIMNQTRT (71 aa). The Interaction with polymerase core subunit RpoC signature appears at 118 to 121; it reads DLIE. The tract at residues 174–249 is sigma-70 factor domain-3; the sequence is ELNVYLRTAR…DEKENGPEDT (76 aa). The tract at residues 262-315 is sigma-70 factor domain-4; that stretch reads WLFELNAKQREVLARRFGLLGYEAATLEDVGREIGLTRERVRQIQVEGLRRLRE. Positions 288-307 form a DNA-binding region, H-T-H motif; the sequence is LEDVGREIGLTRERVRQIQV.

It belongs to the sigma-70 factor family. RpoS subfamily. As to quaternary structure, interacts with the RNA polymerase core enzyme.

It localises to the cytoplasm. Functionally, sigma factors are initiation factors that promote the attachment of RNA polymerase to specific initiation sites and are then released. This sigma factor is the master transcriptional regulator of the stationary phase and the general stress response. The sequence is that of RNA polymerase sigma factor RpoS from Shigella flexneri.